The primary structure comprises 52 residues: ATP synthase F(1) complex subunit epsilon, mitochondrial (52 aa).

Residues Lys-21, Lys-32, and Lys-37 each carry the N6-acetyllysine; alternate modification. Lys-21, Lys-32, and Lys-37 each carry N6-succinyllysine; alternate. Position 44 is an N6-acetyllysine (Lys-44).

It belongs to the eukaryotic ATPase epsilon family. As to quaternary structure, component of the ATP synthase complex composed at least of ATP5F1A/subunit alpha, ATP5F1B/subunit beta, ATP5MC1/subunit c (homooctomer), MT-ATP6/subunit a, MT-ATP8/subunit 8, ATP5ME/subunit e, ATP5MF/subunit f, ATP5MG/subunit g, ATP5MK/subunit k, ATP5MJ/subunit j, ATP5F1C/subunit gamma, ATP5F1D/subunit delta, ATP5F1E/subunit epsilon, ATP5PF/subunit F6, ATP5PB/subunit b, ATP5PD/subunit d, ATP5PO/subunit OSCP. ATP synthase complex consists of a soluble F(1) head domain (subunits alpha(3) and beta(3)) - the catalytic core - and a membrane F(0) domain - the membrane proton channel (subunits c, a, 8, e, f, g, k and j). These two domains are linked by a central stalk (subunits gamma, delta, and epsilon) rotating inside the F1 region and a stationary peripheral stalk (subunits F6, b, d, and OSCP).

It is found in the mitochondrion. The protein resides in the mitochondrion inner membrane. In terms of biological role, subunit epsilon, of the mitochondrial membrane ATP synthase complex (F(1)F(0) ATP synthase or Complex V) that produces ATP from ADP in the presence of a proton gradient across the membrane which is generated by electron transport complexes of the respiratory chain. ATP synthase complex consist of a soluble F(1) head domain - the catalytic core - and a membrane F(1) domain - the membrane proton channel. These two domains are linked by a central stalk rotating inside the F(1) region and a stationary peripheral stalk. During catalysis, ATP synthesis in the catalytic domain of F(1) is coupled via a rotary mechanism of the central stalk subunits to proton translocation. In vivo, can only synthesize ATP although its ATP hydrolase activity can be activated artificially in vitro. May be essential for the assembly of F(1) and may play an important role in the incorporation of the hydrophobic subunit c into the F(1)-c oligomer rotor of the mitochondrial ATP synthase complex. This chain is ATP synthase F(1) complex subunit epsilon, mitochondrial, found in Mus musculus (Mouse).